The sequence spans 211 residues: Beta-crystallin B3 (211 aa).

Positions 1 to 21 (MTEQQSPPEQMVTGEGAGERG) are disordered. Positions 1–23 (MTEQQSPPEQMVTGEGAGERGGN) are N-terminal arm. 2 consecutive Beta/gamma crystallin 'Greek key' domains span residues 24–63 (YKIT…QVES) and 64–108 (GPWL…RPLQ). The connecting peptide stretch occupies residues 109 to 113 (IDSPD). Beta/gamma crystallin 'Greek key' domains lie at 114–155 (HKIH…RALN) and 156–198 (GTWV…RRVR). Positions 200 to 211 (QQWHQRGSFENS) are C-terminal arm.

This sequence belongs to the beta/gamma-crystallin family. As to quaternary structure, homo/heterodimer, or complexes of higher-order. The structure of beta-crystallin oligomers seems to be stabilized through interactions between the N-terminal arms.

In terms of biological role, crystallins are the dominant structural components of the vertebrate eye lens. This is Beta-crystallin B3 (CRYBB3) from Gallus gallus (Chicken).